The following is a 155-amino-acid chain: Transcription antitermination protein NusB (155 aa).

It belongs to the NusB family.

Functionally, involved in transcription antitermination. Required for transcription of ribosomal RNA (rRNA) genes. Binds specifically to the boxA antiterminator sequence of the ribosomal RNA (rrn) operons. The sequence is that of Transcription antitermination protein NusB from Vibrio parahaemolyticus serotype O3:K6 (strain RIMD 2210633).